A 927-amino-acid chain; its full sequence is DNA mismatch repair protein MutS (927 aa).

Position 646–653 (646–653 (GPNMAGKS)) interacts with ATP. Positions 904-927 (SAQPGSAEQGESPDKHDEGKNSRG) are disordered. The span at 915-927 (SPDKHDEGKNSRG) shows a compositional bias: basic and acidic residues.

Belongs to the DNA mismatch repair MutS family.

Functionally, this protein is involved in the repair of mismatches in DNA. It is possible that it carries out the mismatch recognition step. This protein has a weak ATPase activity. The sequence is that of DNA mismatch repair protein MutS from Desulfovibrio desulfuricans (strain ATCC 27774 / DSM 6949 / MB).